Here is a 170-residue protein sequence, read N- to C-terminus: Cytochrome c-type biogenesis protein CcmE (170 aa).

The Cytoplasmic segment spans residues 1–7 (MTRKQRR). The chain crosses the membrane as a helical; Signal-anchor for type II membrane protein span at residues 8–28 (LTIIGGALFVLAVAAGLVLNA). At 29 to 170 (LRDSIVFFST…GEKTAAGATQ (142 aa)) the chain is on the periplasmic side. Heme contacts are provided by His-122 and Tyr-126. Over residues 137 to 146 (KQGHWKDDYG) the composition is skewed to basic and acidic residues. The tract at residues 137-170 (KQGHWKDDYGKPQAAKPGPVSMREGEKTAAGATQ) is disordered.

The protein belongs to the CcmE/CycJ family.

The protein resides in the cell inner membrane. In terms of biological role, heme chaperone required for the biogenesis of c-type cytochromes. Transiently binds heme delivered by CcmC and transfers the heme to apo-cytochromes in a process facilitated by CcmF and CcmH. The protein is Cytochrome c-type biogenesis protein CcmE of Bradyrhizobium sp. (strain BTAi1 / ATCC BAA-1182).